The sequence spans 557 residues: Estrogen receptor beta (557 aa).

The interval 1–154 is modulating; it reads MMAAASSPEK…SSGGKADLHY (154 aa). 2 consecutive NR C4-type zinc fingers follow at residues 155–175 and 191–215; these read CAVC…CEGC and CPAT…LRKC. Positions 155 to 220 form a DNA-binding region, nuclear receptor; it reads CAVCHDYASG…RLRKCYEVGM (66 aa). Residues 240–268 form a disordered region; it reads LTRLSSQGKTAEPKGITGPAEGSLNKPEK. An NR LBD domain is found at 272 to 508; sequence TPEQLIERIL…DLLLEMLDAH (237 aa). The tract at residues 513-557 is disordered; sequence SCLPHQPPQQDSKDQSEVPAPLHSSAGGPSNTWTPSSARAGGESQ. Residues 539-557 show a composition bias toward polar residues; it reads GGPSNTWTPSSARAGGESQ.

The protein belongs to the nuclear hormone receptor family. NR3 subfamily. Binds DNA as a homodimer. Can form a heterodimer with ER-alpha.

It is found in the nucleus. Its function is as follows. Binds estrogens with an affinity similar to that of ER-alpha, and activates expression of reporter genes containing estrogen response elements (ERE) in an estrogen-dependent manner. This Oreochromis niloticus (Nile tilapia) protein is Estrogen receptor beta (esr2).